The primary structure comprises 405 residues: Arginine biosynthesis bifunctional protein ArgJ (405 aa).

T152, K178, T189, E276, N400, and T405 together coordinate substrate. The active-site Nucleophile is T189.

It belongs to the ArgJ family. As to quaternary structure, heterotetramer of two alpha and two beta chains.

Its subcellular location is the cytoplasm. The catalysed reaction is N(2)-acetyl-L-ornithine + L-glutamate = N-acetyl-L-glutamate + L-ornithine. The enzyme catalyses L-glutamate + acetyl-CoA = N-acetyl-L-glutamate + CoA + H(+). The protein operates within amino-acid biosynthesis; L-arginine biosynthesis; L-ornithine and N-acetyl-L-glutamate from L-glutamate and N(2)-acetyl-L-ornithine (cyclic): step 1/1. It functions in the pathway amino-acid biosynthesis; L-arginine biosynthesis; N(2)-acetyl-L-ornithine from L-glutamate: step 1/4. Functionally, catalyzes two activities which are involved in the cyclic version of arginine biosynthesis: the synthesis of N-acetylglutamate from glutamate and acetyl-CoA as the acetyl donor, and of ornithine by transacetylation between N(2)-acetylornithine and glutamate. In Pseudomonas syringae pv. tomato (strain ATCC BAA-871 / DC3000), this protein is Arginine biosynthesis bifunctional protein ArgJ.